The chain runs to 174 residues: Translation initiation factor IF-3 (174 aa).

It belongs to the IF-3 family. Monomer.

It localises to the cytoplasm. Its function is as follows. IF-3 binds to the 30S ribosomal subunit and shifts the equilibrium between 70S ribosomes and their 50S and 30S subunits in favor of the free subunits, thus enhancing the availability of 30S subunits on which protein synthesis initiation begins. The protein is Translation initiation factor IF-3 of Helicobacter hepaticus (strain ATCC 51449 / 3B1).